Here is a 782-residue protein sequence, read N- to C-terminus: MKISSGAINFSTIPNQVKKLITSIREHTKNGLTSKITSVKNTHTSLNEKFKTGKDSPIEFALPQKIKDFFQPKDKNTLNKTLITVKNIKDTNNAGKKNISAEDVSKMNAAFMRKHIANQTCDYNYRMTGAAPLPGGVSVSANNRPTVSEGRTPPVSPSLSLQATSSPSSPADWAKKLTDAVLRQKAGETLTAADRDFSNADFRNITFSKILPPSFMERDGDIIKGFNFSNSKFTYSDISHLHFDECRFTYSTLSDVVCSNTKFSNSDMNEVFLQYSITTQQQPSFIDTTLKNTLIRHKANLSGVILNEPDNSSPPSVSRGGNFIRLGDIWLQMPLLWTENAADGFLNHEHNNGKSILMTIDSLPDKYSQEKVRAMEDLVKSLRDGRLTEAGIRPVESSLVSVLAHPPYTQSALISEWLGPVQERFFAHQCQTYNDVPLPAPDTYYQQRLLPVLLDSFDRNSAAMTTHSGLFNQVILHCMTGVDCTDGIRQKAAALYEQYLAHPAVSPHIHNGLFGNYDGSPDWTTRAADNFLLLSSQDSDTAMMLSTDTLLTMLNPTPDTAWDNFYLLRAGENVSTAQISPVELFRHDFPVFLAAFNQQATQRRFGELIDIILSTEEHGELNQQFIAATNQKHSTVKLIDDASVSRLATIFAPLLPEGKLSPAHYQHILSAYHLTDATPQKQAETLFCLSTAFARYSSSAIFGTEHDSPPALRGYAEALMQKAWELSPAIFPSSEQFTDWSDRFHGLHGAFTCTSVVADSMQRHARKYFPSVLSSILPLAWA.

Residues 137–171 (VSVSANNRPTVSEGRTPPVSPSLSLQATSSPSSPA) are disordered. A compositionally biased stretch (low complexity) spans 157-171 (PSLSLQATSSPSSPA). Cys-753 acts as the Glycyl thioester intermediate in catalysis.

This sequence belongs to the SopA E3 ligase family. In terms of processing, ubiquitinated in the presence of host E1 ubiquitin-activating enzyme, E2 ubiquitin-conjugating enzyme and ubiquitin.

It localises to the secreted. Its subcellular location is the host cell. It catalyses the reaction S-ubiquitinyl-[E2 ubiquitin-conjugating enzyme]-L-cysteine + [acceptor protein]-L-lysine = [E2 ubiquitin-conjugating enzyme]-L-cysteine + N(6)-ubiquitinyl-[acceptor protein]-L-lysine.. Effector proteins function to alter host cell physiology and promote bacterial survival in host tissues. This protein is an E3 ubiquitin ligase that interferes with host's ubiquitination pathway. The protein is E3 ubiquitin-protein ligase SopA (sopA) of Salmonella heidelberg (strain SL476).